We begin with the raw amino-acid sequence, 546 residues long: Chaperonin GroEL 1 (546 aa).

Residues 30–33 (TLGP), Lys51, 87–91 (DGTTT), Gly415, 479–481 (NAA), and Asp495 each bind ATP. Positions 526-546 (KEDAPMPGGMPGGMGGMGMDM) are disordered. Gly residues predominate over residues 534 to 546 (GMPGGMGGMGMDM).

The protein belongs to the chaperonin (HSP60) family. As to quaternary structure, forms a cylinder of 14 subunits composed of two heptameric rings stacked back-to-back. Interacts with the co-chaperonin GroES.

It is found in the cytoplasm. It carries out the reaction ATP + H2O + a folded polypeptide = ADP + phosphate + an unfolded polypeptide.. Its function is as follows. Together with its co-chaperonin GroES, plays an essential role in assisting protein folding. The GroEL-GroES system forms a nano-cage that allows encapsulation of the non-native substrate proteins and provides a physical environment optimized to promote and accelerate protein folding. This is Chaperonin GroEL 1 from Burkholderia pseudomallei (strain 1106a).